We begin with the raw amino-acid sequence, 138 residues long: uncharacterized protein (138 aa).

This is an uncharacterized protein from Escherichia coli (strain K12).